A 579-amino-acid polypeptide reads, in one-letter code: Probable serine/threonine-protein kinase kinY (579 aa).

The disordered stretch occupies residues 1–24; sequence MINGEQTMVEDELPDQGKPMSDES. One can recognise a Protein kinase domain in the interval 32-309; the sequence is LKVGESIGSG…HVLKQLTSLF (278 aa). ATP is bound by residues 38-46 and Lys59; that span reads IGSGAYGIV. Catalysis depends on Asp167, which acts as the Proton acceptor.

It belongs to the protein kinase superfamily. TKL Ser/Thr protein kinase family.

The enzyme catalyses L-seryl-[protein] + ATP = O-phospho-L-seryl-[protein] + ADP + H(+). It carries out the reaction L-threonyl-[protein] + ATP = O-phospho-L-threonyl-[protein] + ADP + H(+). This is Probable serine/threonine-protein kinase kinY (kinY) from Dictyostelium discoideum (Social amoeba).